A 1311-amino-acid chain; its full sequence is Kinase and exchange factor for Rac A (1311 aa).

In terms of domain architecture, Protein kinase spans 18 to 316; it reads LVFKDIIGKG…STIVTILESI (299 aa). Residues 24–32 and Lys-45 each bind ATP; that span reads IGKGNFGCV. Asp-138 serves as the catalytic Proton acceptor. Disordered regions lie at residues 169-201, 360-426, and 446-471; these read NGSDSSSSEDESDSECVNGAAGGGGDDVYKNNG, QQQS…TTTT, and PLSKHQQQQQRNQNSSIIDNNSLIGS. Residues 451–471 are compositionally biased toward low complexity; the sequence is QQQQQRNQNSSIIDNNSLIGS. The 30-residue stretch at 650 to 679 folds into the IQ domain; it reads ELNLIIKLQSRIRGWLVRRRYKIFLSNWKL. Residues 691–927 enclose the DH domain; that stretch reads QWIRLFNQLI…RETSNYIQSQ (237 aa). Low complexity-rich tracts occupy residues 994 to 1021 and 1031 to 1044; these read SKYNNNNNINTNNNNNNLTSSATQTNSN and STSNANSDNSGNNN. Disordered regions lie at residues 994 to 1044, 1114 to 1145, and 1208 to 1311; these read SKYN…GNNN, NNPNGGGSNNNSIGGGGGGRGGSGNNSNNGSI, and GTST…FSKD. The span at 1117 to 1137 shows a compositional bias: gly residues; that stretch reads NGGGSNNNSIGGGGGGRGGSG. The span at 1208–1229 shows a compositional bias: polar residues; that stretch reads GTSTPERKTSLVNMSPSTTSSL. Low complexity predominate over residues 1230–1245; the sequence is NNIDSNYNNNNNNVTN. Polar residues predominate over residues 1246 to 1257; that stretch reads TPIKSVTSSPSI. Residues 1263–1276 are compositionally biased toward low complexity; it reads NDNNQQPQLPSQPN. Residues 1277–1287 are compositionally biased toward polar residues; that stretch reads EEFQFTVPTTP. Residues 1290–1303 show a composition bias toward basic residues; that stretch reads KKKKRGSFSSKLKR.

This sequence belongs to the protein kinase superfamily. TKL Ser/Thr protein kinase family. Mg(2+) is required as a cofactor.

It carries out the reaction L-seryl-[protein] + ATP = O-phospho-L-seryl-[protein] + ADP + H(+). The enzyme catalyses L-threonyl-[protein] + ATP = O-phospho-L-threonyl-[protein] + ADP + H(+). The polypeptide is Kinase and exchange factor for Rac A (kxcA) (Dictyostelium discoideum (Social amoeba)).